Consider the following 119-residue polypeptide: Large ribosomal subunit protein bL19 (119 aa).

It belongs to the bacterial ribosomal protein bL19 family.

Its function is as follows. This protein is located at the 30S-50S ribosomal subunit interface and may play a role in the structure and function of the aminoacyl-tRNA binding site. The sequence is that of Large ribosomal subunit protein bL19 from Borreliella afzelii (strain PKo) (Borrelia afzelii).